The following is a 341-amino-acid chain: MNRKVLKVIDGETVFPPPIWMMRQAGRYLPEYRETRKKAGSFLDLCYSPDLAVEVTLQPIRRFGFDAAILFSDILVVPHALGRDLRFEEGKGPLMTPIDADEIFWLETEGVAKRLEPVYETVRLVREQLPDETTLLGFCGAPWTVATYMIAGHGTPDQAPARLFAYRFPEAFEKLLNDLADVSAEYLIEQLGAGADAVQIFDSWSGVLDEDCFERFCIRLVARIVQKVRAVYPQARIIGFPKGAGMLYAGYREKTGVDMLGLDWSVPLSFAALLQEEGAVQGNLDPLRVVAGGNALDEGVDAILERMGQGPLVFNLGHGITPQAPIENVQRMIDRVRGGKS.

Residues 23–27 (RQAGR), Asp73, Tyr148, Ser203, and His318 contribute to the substrate site.

The protein belongs to the uroporphyrinogen decarboxylase family. In terms of assembly, homodimer.

It is found in the cytoplasm. The enzyme catalyses uroporphyrinogen III + 4 H(+) = coproporphyrinogen III + 4 CO2. It functions in the pathway porphyrin-containing compound metabolism; protoporphyrin-IX biosynthesis; coproporphyrinogen-III from 5-aminolevulinate: step 4/4. Functionally, catalyzes the decarboxylation of four acetate groups of uroporphyrinogen-III to yield coproporphyrinogen-III. This chain is Uroporphyrinogen decarboxylase, found in Brucella ovis (strain ATCC 25840 / 63/290 / NCTC 10512).